A 156-amino-acid chain; its full sequence is ATP synthase subunit b (156 aa).

A helical transmembrane segment spans residues 7-29; that stretch reads LFAQMVVFLVLAWFTMKFVWPPL.

It belongs to the ATPase B chain family. F-type ATPases have 2 components, F(1) - the catalytic core - and F(0) - the membrane proton channel. F(1) has five subunits: alpha(3), beta(3), gamma(1), delta(1), epsilon(1). F(0) has three main subunits: a(1), b(2) and c(10-14). The alpha and beta chains form an alternating ring which encloses part of the gamma chain. F(1) is attached to F(0) by a central stalk formed by the gamma and epsilon chains, while a peripheral stalk is formed by the delta and b chains.

It localises to the cell inner membrane. In terms of biological role, f(1)F(0) ATP synthase produces ATP from ADP in the presence of a proton or sodium gradient. F-type ATPases consist of two structural domains, F(1) containing the extramembraneous catalytic core and F(0) containing the membrane proton channel, linked together by a central stalk and a peripheral stalk. During catalysis, ATP synthesis in the catalytic domain of F(1) is coupled via a rotary mechanism of the central stalk subunits to proton translocation. Component of the F(0) channel, it forms part of the peripheral stalk, linking F(1) to F(0). The chain is ATP synthase subunit b from Burkholderia cenocepacia (strain ATCC BAA-245 / DSM 16553 / LMG 16656 / NCTC 13227 / J2315 / CF5610) (Burkholderia cepacia (strain J2315)).